A 449-amino-acid polypeptide reads, in one-letter code: Glucose-6-phosphate isomerase (449 aa).

The active-site Proton donor is glutamate 290. Catalysis depends on residues histidine 311 and lysine 425.

It belongs to the GPI family.

It localises to the cytoplasm. It carries out the reaction alpha-D-glucose 6-phosphate = beta-D-fructose 6-phosphate. Its pathway is carbohydrate biosynthesis; gluconeogenesis. The protein operates within carbohydrate degradation; glycolysis; D-glyceraldehyde 3-phosphate and glycerone phosphate from D-glucose: step 2/4. Catalyzes the reversible isomerization of glucose-6-phosphate to fructose-6-phosphate. This chain is Glucose-6-phosphate isomerase, found in Exiguobacterium sibiricum (strain DSM 17290 / CCUG 55495 / CIP 109462 / JCM 13490 / 255-15).